A 1026-amino-acid chain; its full sequence is Probable DNA-directed RNA polymerase II subunit RPB1 homolog (1026 aa).

Zn(2+) contacts are provided by Cys62, Cys65, Cys72, His75, Cys102, Cys105, and Cys142. Residues Asp588, Asp590, and Asp592 each contribute to the Mg(2+) site.

Belongs to the RNA polymerase beta' chain family.

The catalysed reaction is RNA(n) + a ribonucleoside 5'-triphosphate = RNA(n+1) + diphosphate. Its function is as follows. Component of the DNA-dependent RNA polymerase that catalyzes the transcription of DNA into RNA using the four ribonucleoside triphosphates as substrates. Largest and catalytic component of RNA polymerase II which synthesizes mRNA precursors and many functional non-coding RNAs. Forms the polymerase active center together with the second largest subunit. In Acheta domesticus (House cricket), this protein is Probable DNA-directed RNA polymerase II subunit RPB1 homolog.